Reading from the N-terminus, the 206-residue chain is Cytochrome c oxidase assembly factor 8 (206 aa).

The transit peptide at Met1 to Leu39 directs the protein to the mitochondrion.

Belongs to the COA8 family. Post-translationally, N-terminal mitochondrial targeting sequence is cleaved from the mature protein once in the mitochondrion. In terms of processing, in normal conditions, the cytoplasmic precursor protein is rapidly degraded by the ubiquitination-proteasome system (UPS). Oxidative stress induces protein stabilization and import into mitochondria where it protects COX from degradation. As to expression, expressed in fibroblasts.

The protein resides in the mitochondrion inner membrane. In terms of biological role, required for cytochrome c complex (COX) IV assembly and function Protects COX assembly from oxidation-induced degradation, COX being the terminal component of the mitochondrial respiratory chain. The chain is Cytochrome c oxidase assembly factor 8 from Homo sapiens (Human).